Here is a 209-residue protein sequence, read N- to C-terminus: 3-demethoxyubiquinol 3-hydroxylase (209 aa).

The Fe cation site is built by glutamate 58, glutamate 88, histidine 91, glutamate 140, glutamate 172, and histidine 175.

This sequence belongs to the COQ7 family. Fe cation is required as a cofactor.

The protein resides in the cell membrane. It catalyses the reaction a 5-methoxy-2-methyl-3-(all-trans-polyprenyl)benzene-1,4-diol + AH2 + O2 = a 3-demethylubiquinol + A + H2O. It participates in cofactor biosynthesis; ubiquinone biosynthesis. Its function is as follows. Catalyzes the hydroxylation of 2-nonaprenyl-3-methyl-6-methoxy-1,4-benzoquinol during ubiquinone biosynthesis. In Polynucleobacter necessarius subsp. necessarius (strain STIR1), this protein is 3-demethoxyubiquinol 3-hydroxylase.